The primary structure comprises 183 residues: Peptide methionine sulfoxide reductase MsrA 1 (183 aa).

The active site involves C12.

It belongs to the MsrA Met sulfoxide reductase family.

It carries out the reaction L-methionyl-[protein] + [thioredoxin]-disulfide + H2O = L-methionyl-(S)-S-oxide-[protein] + [thioredoxin]-dithiol. The catalysed reaction is [thioredoxin]-disulfide + L-methionine + H2O = L-methionine (S)-S-oxide + [thioredoxin]-dithiol. Its function is as follows. Has an important function as a repair enzyme for proteins that have been inactivated by oxidation. Catalyzes the reversible oxidation-reduction of methionine sulfoxide in proteins to methionine. This Lactococcus lactis subsp. lactis (strain IL1403) (Streptococcus lactis) protein is Peptide methionine sulfoxide reductase MsrA 1 (msrA1).